The following is a 133-amino-acid chain: Putative dispanin subfamily A member 2d (133 aa).

Topologically, residues Met-1–His-57 are extracellular. Lys-24 participates in a covalent cross-link: Glycyl lysine isopeptide (Lys-Gly) (interchain with G-Cter in ubiquitin). The chain crosses the membrane as a helical span at residues Val-58–Phe-78. The Cytoplasmic portion of the chain corresponds to Ala-79–Asn-107. Residues Lys-83, Lys-88, and Lys-104 each participate in a glycyl lysine isopeptide (Lys-Gly) (interchain with G-Cter in ubiquitin) cross-link. A helical membrane pass occupies residues Ile-108–Ile-128. The Extracellular segment spans residues Phe-129 to Arg-133.

Belongs to the CD225/Dispanin family.

It is found in the membrane. The sequence is that of Putative dispanin subfamily A member 2d from Homo sapiens (Human).